A 305-amino-acid chain; its full sequence is tRNA dimethylallyltransferase (305 aa).

Residue 14–21 (GPTTSGKT) participates in ATP binding. 16–21 (TTSGKT) is a substrate binding site. 3 interaction with substrate tRNA regions span residues 39–42 (DSAL), 163–167 (QRITR), and 243–248 (RCVGYR).

It belongs to the IPP transferase family. As to quaternary structure, monomer. Requires Mg(2+) as cofactor.

The enzyme catalyses adenosine(37) in tRNA + dimethylallyl diphosphate = N(6)-dimethylallyladenosine(37) in tRNA + diphosphate. Its function is as follows. Catalyzes the transfer of a dimethylallyl group onto the adenine at position 37 in tRNAs that read codons beginning with uridine, leading to the formation of N6-(dimethylallyl)adenosine (i(6)A). The polypeptide is tRNA dimethylallyltransferase (Ruthia magnifica subsp. Calyptogena magnifica).